Here is a 310-residue protein sequence, read N- to C-terminus: Aminoacyl tRNA synthase complex-interacting multifunctional protein 1 (310 aa).

Position 2 is an N-acetylalanine (alanine 2). A required for fibroblast proliferation region spans residues 6-46; it reads AVLKRLEQKGAEADQIIEYLKQQVALLKEKAILQATMREEK. Residues 54 to 192 are interaction with HSP90B1; that stretch reads KLKKEIEELK…APRTVVSGLV (139 aa). The segment covering 92–110 has biased composition (polar residues); it reads ASESVVQSPSVATTASPAT. Residues 92 to 147 form a disordered region; it reads ASESVVQSPSVATTASPATKEQIKAGEEKKVKEKTEKKGEKKEKQQSAAASTDSKP. A required for endothelial cell death region spans residues 101–115; sequence SVATTASPATKEQIK. Over residues 112-136 the composition is skewed to basic and acidic residues; the sequence is EQIKAGEEKKVKEKTEKKGEKKEKQ. Residues 115-190 are required for endothelial cell migration; that stretch reads KAGEEKKVKE…EAAPRTVVSG (76 aa). Phosphoserine is present on serine 138. A tRNA-binding domain is found at 149–250; sequence DASRLDLRIG…NGSVPGDRIT (102 aa). N6-succinyllysine is present on lysine 267.

As to quaternary structure, homodimer. Part of the multisynthetase complex (MSC), a multisubunit complex that groups tRNA ligases for Arg (RARS1), Asp (DARS1), Gln (QARS1), Ile (IARS1), Leu (LARS1), Lys (KARS1), Met (MARS1) the bifunctional ligase for Glu and Pro (EPRS1) and the auxiliary subunits AIMP1/p43, AIMP2/p38 and EEF1E1/p18. Interacts (via N-terminus) with RARS1 (via N-terminus). Part of a complex composed of RARS1, QARS1 and AIMP1. Interacts (via C-terminus) with SMURF2. Interacts (via N-terminus) with HSP90B1/gp96 (via C-terminus). Interacts with PSMA7. Interacts with TARS3. Post-translationally, cleaved by caspase-7 in response to apoptosis to produce EMAP-II. Highly expressed in salivary glands and pancreatic alpha cells in the adult (at protein level). In the embryo, expressed primarily at sites of tissue remodeling such as ganglia, developing bones and teeth.

It localises to the nucleus. The protein localises to the cytoplasm. It is found in the cytosol. The protein resides in the secreted. Its subcellular location is the endoplasmic reticulum. It localises to the golgi apparatus. Its function is as follows. Non-catalytic component of the multisynthase complex. Stimulates the catalytic activity of cytoplasmic arginyl-tRNA synthase. Binds tRNA. Possesses inflammatory cytokine activity. Negatively regulates TGF-beta signaling through stabilization of SMURF2 by binding to SMURF2 and inhibiting its SMAD7-mediated degradation. Involved in glucose homeostasis through induction of glucagon secretion at low glucose levels. Promotes dermal fibroblast proliferation and wound repair. Regulates KDELR1-mediated retention of HSP90B1/gp96 in the endoplasmic reticulum. Plays a role in angiogenesis by inducing endothelial cell migration at low concentrations and endothelian cell apoptosis at high concentrations. Induces maturation of dendritic cells and monocyte cell adhesion. Modulates endothelial cell responses by degrading HIF-1A through interaction with PSMA7. This chain is Aminoacyl tRNA synthase complex-interacting multifunctional protein 1 (Aimp1), found in Mus musculus (Mouse).